Here is a 152-residue protein sequence, read N- to C-terminus: Superoxide dismutase [Cu-Zn] 1 (152 aa).

Cu cation contacts are provided by histidine 45, histidine 47, and histidine 62. Cysteine 56 and cysteine 145 are joined by a disulfide. Positions 62, 70, 79, and 82 each coordinate Zn(2+). Histidine 119 contributes to the Cu cation binding site.

The protein belongs to the Cu-Zn superoxide dismutase family. As to quaternary structure, homodimer. It depends on Cu cation as a cofactor. The cofactor is Zn(2+).

Its subcellular location is the cytoplasm. It carries out the reaction 2 superoxide + 2 H(+) = H2O2 + O2. In terms of biological role, destroys radicals which are normally produced within the cells and which are toxic to biological systems. This chain is Superoxide dismutase [Cu-Zn] 1 (SODCC.1), found in Solanum lycopersicum (Tomato).